Reading from the N-terminus, the 155-residue chain is Small ribosomal subunit protein uS7cz/uS7cy (155 aa).

It belongs to the universal ribosomal protein uS7 family. As to quaternary structure, part of the 30S ribosomal subunit.

The protein localises to the plastid. Its subcellular location is the chloroplast. Functionally, one of the primary rRNA binding proteins, it binds directly to 16S rRNA where it nucleates assembly of the head domain of the 30S subunit. The sequence is that of Small ribosomal subunit protein uS7cz/uS7cy (rps7-A) from Morus indica (Mulberry).